A 224-amino-acid chain; its full sequence is Deoxyribose-phosphate aldolase (224 aa).

Asp-92 functions as the Proton donor/acceptor in the catalytic mechanism. Lys-154 serves as the catalytic Schiff-base intermediate with acetaldehyde. Residue Lys-183 is the Proton donor/acceptor of the active site.

The protein belongs to the DeoC/FbaB aldolase family. DeoC type 1 subfamily.

The protein resides in the cytoplasm. It carries out the reaction 2-deoxy-D-ribose 5-phosphate = D-glyceraldehyde 3-phosphate + acetaldehyde. Its pathway is carbohydrate degradation; 2-deoxy-D-ribose 1-phosphate degradation; D-glyceraldehyde 3-phosphate and acetaldehyde from 2-deoxy-alpha-D-ribose 1-phosphate: step 2/2. In terms of biological role, catalyzes a reversible aldol reaction between acetaldehyde and D-glyceraldehyde 3-phosphate to generate 2-deoxy-D-ribose 5-phosphate. In Mannheimia succiniciproducens (strain KCTC 0769BP / MBEL55E), this protein is Deoxyribose-phosphate aldolase.